The sequence spans 111 residues: Cell division protein FtsB (111 aa).

At 1–3 (MRL) the chain is on the cytoplasmic side. The chain crosses the membrane as a helical span at residues 4 to 21 (LFLVLLVLLGLIQYPLWL). The Periplasmic portion of the chain corresponds to 22-111 (GKGGWFKVWD…PGQTASAPRR (90 aa)). Residues 31–62 (DLQRQVAAQHETNDGLRARNAALEAEVRDLAT) adopt a coiled-coil conformation. The interval 88–111 (VPPGTPVPQPAPGAPGQTASAPRR) is disordered. Positions 90 to 100 (PGTPVPQPAPG) are enriched in pro residues. The span at 101–111 (APGQTASAPRR) shows a compositional bias: low complexity.

It belongs to the FtsB family. As to quaternary structure, part of a complex composed of FtsB, FtsL and FtsQ.

The protein resides in the cell inner membrane. Its function is as follows. Essential cell division protein. May link together the upstream cell division proteins, which are predominantly cytoplasmic, with the downstream cell division proteins, which are predominantly periplasmic. The polypeptide is Cell division protein FtsB (Bordetella petrii (strain ATCC BAA-461 / DSM 12804 / CCUG 43448)).